The chain runs to 513 residues: Calcium-dependent protein kinase 2 (513 aa).

One can recognise a Protein kinase domain in the interval 65–323 (YSFGKELGRG…SAQVLQHQWL (259 aa)). Residues 71 to 79 (LGRGQFGVT) and Lys94 contribute to the ATP site. Asp189 acts as the Proton acceptor in catalysis. The tract at residues 329-359 (ASDKPIDSAVLSRMKQFRAMNKLKKMALKVI) is autoinhibitory domain. EF-hand domains are found at residues 366–401 (EEIK…LGSK), 402–437 (LSEA…RHKL), 438–473 (ERDE…HEMG), and 478–508 (IREI…GMQQ). Positions 379, 381, 383, 385, 390, 415, 417, 419, 421, 426, 451, 453, 455, 462, 486, 488, 490, 492, and 497 each coordinate Ca(2+).

Belongs to the protein kinase superfamily. Ser/Thr protein kinase family. CDPK subfamily.

The enzyme catalyses L-seryl-[protein] + ATP = O-phospho-L-seryl-[protein] + ADP + H(+). It carries out the reaction L-threonyl-[protein] + ATP = O-phospho-L-threonyl-[protein] + ADP + H(+). With respect to regulation, activated by calcium. Autophosphorylation may play an important role in the regulation of the kinase activity. Its function is as follows. May play a role in signal transduction pathways that involve calcium as a second messenger. In Zea mays (Maize), this protein is Calcium-dependent protein kinase 2 (CPK2).